The primary structure comprises 200 residues: Recombination protein RecR (200 aa).

The segment at 59–74 (CEVCGNVCESSPCTIC) adopts a C4-type zinc-finger fold. Residues 82 to 177 (GTICVVEEPK…KVTRLASGLP (96 aa)) form the Toprim domain.

This sequence belongs to the RecR family.

In terms of biological role, may play a role in DNA repair. It seems to be involved in an RecBC-independent recombinational process of DNA repair. It may act with RecF and RecO. The protein is Recombination protein RecR of Bifidobacterium animalis subsp. lactis (strain AD011).